Here is a 689-residue protein sequence, read N- to C-terminus: Glycine--tRNA ligase beta subunit (689 aa).

This sequence belongs to the class-II aminoacyl-tRNA synthetase family. In terms of assembly, tetramer of two alpha and two beta subunits.

The protein localises to the cytoplasm. It carries out the reaction tRNA(Gly) + glycine + ATP = glycyl-tRNA(Gly) + AMP + diphosphate. This is Glycine--tRNA ligase beta subunit from Shewanella baltica (strain OS155 / ATCC BAA-1091).